Consider the following 467-residue polypeptide: 3-isopropylmalate dehydratase large subunit (467 aa).

3 residues coordinate [4Fe-4S] cluster: cysteine 348, cysteine 408, and cysteine 411. The tract at residues 417-445 (DQLTPGERSASTSNRNFEGRQGKGGRTHL) is disordered.

This sequence belongs to the aconitase/IPM isomerase family. LeuC type 1 subfamily. In terms of assembly, heterodimer of LeuC and LeuD. Requires [4Fe-4S] cluster as cofactor.

It catalyses the reaction (2R,3S)-3-isopropylmalate = (2S)-2-isopropylmalate. The protein operates within amino-acid biosynthesis; L-leucine biosynthesis; L-leucine from 3-methyl-2-oxobutanoate: step 2/4. Catalyzes the isomerization between 2-isopropylmalate and 3-isopropylmalate, via the formation of 2-isopropylmaleate. The protein is 3-isopropylmalate dehydratase large subunit of Saccharopolyspora erythraea (strain ATCC 11635 / DSM 40517 / JCM 4748 / NBRC 13426 / NCIMB 8594 / NRRL 2338).